We begin with the raw amino-acid sequence, 80 residues long: U-poneritoxin(01)-Om3a (80 aa).

Residues 1–25 (MKPSGLALAFLVVFMMAIMYNSVQA) form the signal peptide. Residues 26-39 (AAIADADAEAEAIA) constitute a propeptide that is removed on maturation.

This sequence belongs to the formicidae venom precursor-01 superfamily. Post-translationally, truncated sequences of this peptide have also been found in the venom. It is possible they have been cleaved in the venom. As to expression, expressed by the venom gland.

It is found in the secreted. In terms of biological role, cationic amphipathic alpha-helical peptide with antimicrobial activities against E.coli (MIC=3.1 uM), S.aureus (MIC=25 uM), and S.cerevisiae (MIC=50 uM). Also shows histamine-releasing activity (37.5% at 10 uM). Does not show hemolytic activity, even at 50 uM. This is U-poneritoxin(01)-Om3a from Odontomachus monticola (Trap-jaw ant).